The following is a 116-amino-acid chain: Early 4 ORF3 protein (116 aa).

It belongs to the adenoviridae E4 ORF3 family. As to quaternary structure, homodimer. Multimerizes through C-terminus tail by reciprocal or nonreciprocal interactions. Interacts with host PML isoform 2 C-terminal disordered region. Interacts with E1B-55k; this interaction is necessary for E1B 55 kDa protein to localize to the nuclear matrix fraction of the cell. May interact with host TRIM24, CREBBP, EP300, PRKDC and the MRN complex MRE11/RAD50/NBS1; these interactions may happen through nuclear bodies complexes.

The protein localises to the host nucleus. Its function is as follows. Forms a multivalent network in host nucleus that inhibits nuclear bodies and prevents antiviral cellular activities. The network is made of multimerized dimers and surrounds adenovirus replication centers and nucleolus. Plays a role in splicing of the major late transcript. Prevents viral genome concatemer formation. This is Early 4 ORF3 protein from Human adenovirus C serotype 2 (HAdV-2).